The primary structure comprises 226 residues: Glutathione S-transferase-like protein gedE (226 aa).

The GST N-terminal domain maps to 4 to 85; the sequence is LLPIKVWGQG…YLVERYDTAH (82 aa). In terms of domain architecture, GST C-terminal spans 92–226; it reads DTNDAQHARQ…VLSAVMPPPS (135 aa).

This sequence belongs to the GST superfamily.

It functions in the pathway secondary metabolite biosynthesis. In terms of biological role, glutathione S-transferase-like protein; part of the gene cluster that mediates the biosynthesis of geodin, an intermediate in the biosynthesis of other natural products. The pathway begins with the synthesis of atrochrysone thioester by the polyketide synthase (PKS) gedC. The atrochrysone carboxyl ACP thioesterase gedB then breaks the thioester bond and releases the atrochrysone carboxylic acid from gedC. The atrochrysone carboxylic acid is then converted to atrochrysone which is further transformed into emodinanthrone. The next step is performed by the emodinanthrone oxygenase gedH that catalyzes the oxidation of emodinanthrone to emodin. Emodin O-methyltransferase encoded probably by gedA then catalyzes methylation of the 8-hydroxy group of emodin to form questin. Ring cleavage of questin by questin oxidase gedK leads to desmethylsulochrin via several intermediates including questin epoxide. Another methylation step probably catalyzed by methyltransferase gedG leads to the formation of sulochrin which is further converted to dihydrogeodin by the sulochrin halogenase gedL. Finally, the dihydrogeodin oxidase gedJ catalyzes the stereospecific phenol oxidative coupling reaction converting dihydrogeodin to geodin. The chain is Glutathione S-transferase-like protein gedE from Aspergillus terreus (strain NIH 2624 / FGSC A1156).